The following is a 608-amino-acid chain: Glutamine--fructose-6-phosphate aminotransferase [isomerizing] (608 aa).

C2 acts as the Nucleophile; for GATase activity in catalysis. The Glutamine amidotransferase type-2 domain occupies 2-217; that stretch reads CGIVGYIGDK…DHEIAIIKKD (216 aa). 2 consecutive SIS domains span residues 285 to 424 and 453 to 598; these read TKED…KKGT and VIQK…VDKP. K603 (for Fru-6P isomerization activity) is an active-site residue.

Homodimer.

The protein localises to the cytoplasm. The catalysed reaction is D-fructose 6-phosphate + L-glutamine = D-glucosamine 6-phosphate + L-glutamate. Its function is as follows. Catalyzes the first step in hexosamine metabolism, converting fructose-6P into glucosamine-6P using glutamine as a nitrogen source. This chain is Glutamine--fructose-6-phosphate aminotransferase [isomerizing], found in Caldanaerobacter subterraneus subsp. tengcongensis (strain DSM 15242 / JCM 11007 / NBRC 100824 / MB4) (Thermoanaerobacter tengcongensis).